Consider the following 33-residue polypeptide: Kappa-theraphotoxin-Pg2a (33 aa).

Cystine bridges form between Cys-2–Cys-16, Cys-9–Cys-21, and Cys-15–Cys-28.

As to expression, expressed by the venom gland.

The protein localises to the secreted. Functionally, gating modifier of Kv2.1/KCNB1 channels. This Chilobrachys guangxiensis (Chinese earth tiger tarantula) protein is Kappa-theraphotoxin-Pg2a.